A 453-amino-acid chain; its full sequence is Ribosomal protein uS12 methylthiotransferase RimO (453 aa).

An MTTase N-terminal domain is found at 6–116 (PKVGFVSLGC…VMEAVHEALP (111 aa)). Residues C15, C51, C80, C147, C151, and C154 each coordinate [4Fe-4S] cluster. Residues 133 to 370 (LTPRHYAYLK…MEKQAQISAA (238 aa)) enclose the Radical SAM core domain. The TRAM domain occupies 373–441 (EAKIGTVQQC…EHDLYGDALP (69 aa)).

Belongs to the methylthiotransferase family. RimO subfamily. It depends on [4Fe-4S] cluster as a cofactor.

Its subcellular location is the cytoplasm. It catalyses the reaction L-aspartate(89)-[ribosomal protein uS12]-hydrogen + (sulfur carrier)-SH + AH2 + 2 S-adenosyl-L-methionine = 3-methylsulfanyl-L-aspartate(89)-[ribosomal protein uS12]-hydrogen + (sulfur carrier)-H + 5'-deoxyadenosine + L-methionine + A + S-adenosyl-L-homocysteine + 2 H(+). Functionally, catalyzes the methylthiolation of an aspartic acid residue of ribosomal protein uS12. This chain is Ribosomal protein uS12 methylthiotransferase RimO, found in Stenotrophomonas maltophilia (strain K279a).